The following is a 1368-amino-acid chain: DNA-directed RNA polymerase subunit beta (1368 aa).

Belongs to the RNA polymerase beta chain family. In terms of assembly, the RNAP catalytic core consists of 2 alpha, 1 beta, 1 beta' and 1 omega subunit. When a sigma factor is associated with the core the holoenzyme is formed, which can initiate transcription.

It carries out the reaction RNA(n) + a ribonucleoside 5'-triphosphate = RNA(n+1) + diphosphate. Its function is as follows. DNA-dependent RNA polymerase catalyzes the transcription of DNA into RNA using the four ribonucleoside triphosphates as substrates. This Ralstonia pickettii (strain 12J) protein is DNA-directed RNA polymerase subunit beta.